The following is a 104-amino-acid chain: Nucleoid-associated protein jk2011 (104 aa).

The protein belongs to the YbaB/EbfC family. In terms of assembly, homodimer.

It is found in the cytoplasm. It localises to the nucleoid. Its function is as follows. Binds to DNA and alters its conformation. May be involved in regulation of gene expression, nucleoid organization and DNA protection. The chain is Nucleoid-associated protein jk2011 from Corynebacterium jeikeium (strain K411).